Here is a 38-residue protein sequence, read N- to C-terminus: Photosystem II reaction center protein L (38 aa).

Residues 17 to 37 (SLYWGLLLIFVLAVLFSSYIF) traverse the membrane as a helical segment.

This sequence belongs to the PsbL family. PSII is composed of 1 copy each of membrane proteins PsbA, PsbB, PsbC, PsbD, PsbE, PsbF, PsbH, PsbI, PsbJ, PsbK, PsbL, PsbM, PsbT, PsbX, PsbY, PsbZ, Psb30/Ycf12, at least 3 peripheral proteins of the oxygen-evolving complex and a large number of cofactors. It forms dimeric complexes.

The protein localises to the plastid. It is found in the chloroplast thylakoid membrane. Its function is as follows. One of the components of the core complex of photosystem II (PSII). PSII is a light-driven water:plastoquinone oxidoreductase that uses light energy to abstract electrons from H(2)O, generating O(2) and a proton gradient subsequently used for ATP formation. It consists of a core antenna complex that captures photons, and an electron transfer chain that converts photonic excitation into a charge separation. This subunit is found at the monomer-monomer interface and is required for correct PSII assembly and/or dimerization. In Tupiella akineta (Green alga), this protein is Photosystem II reaction center protein L.